The chain runs to 327 residues: Small ribosomal subunit protein RACK1z (327 aa).

7 WD repeats span residues 13–44, 61–91, 103–133, 148–180, 192–222, 233–262, and 293–323; these read AHTD…ILWK, GHSH…RLWD, GHTK…KLWN, GHRD…KVWN, GHTG…LLWD, EANS…KIWD, and RKVI…RVWG.

Belongs to the WD repeat G protein beta family. Ribosomal protein RACK1 subfamily. As to quaternary structure, homodimer and heterodimer with RACK1B or RACK1C. Interacts with NUDT7. Interacts with GB1, MEKK1, MKK4, MKK5, MPK3 and MPK6, but not with GPA1 or MPK4. Interacts with OFUT20. Widely expressed.

It is found in the cytoplasm. Its subcellular location is the nucleus. Major component of the RACK1 regulatory proteins that play a role in multiple signal transduction pathways. Involved in multiple hormone responses and developmental processes. MAPK cascade scaffolding protein involved in the protease IV and ArgC signaling pathway but not the flg22 pathway. In Arabidopsis thaliana (Mouse-ear cress), this protein is Small ribosomal subunit protein RACK1z.